The sequence spans 104 residues: uncharacterized protein (104 aa).

Basic and acidic residues predominate over residues 58–71 (PERDRARRDRDHHP). Residues 58 to 84 (PERDRARRDRDHHPWSRSRSQLSPRMA) form a disordered region.

This is an uncharacterized protein from Mycobacterium tuberculosis (strain ATCC 25618 / H37Rv).